A 466-amino-acid polypeptide reads, in one-letter code: Argininosuccinate lyase (466 aa).

The 2-(N(omega)-L-arginino)succinate site is built by Ser27, Asn114, and Thr159. His160 functions as the Proton acceptor in the catalytic mechanism. Ser281 functions as the Proton donor in the catalytic mechanism. Residues Asn289, Tyr321, Gln326, and Lys329 each contribute to the 2-(N(omega)-L-arginino)succinate site.

This sequence belongs to the lyase 1 family. Argininosuccinate lyase subfamily. Homotetramer. The N-terminus is blocked. As to expression, eye lens.

The enzyme catalyses 2-(N(omega)-L-arginino)succinate = fumarate + L-arginine. It participates in amino-acid biosynthesis; L-arginine biosynthesis; L-arginine from L-ornithine and carbamoyl phosphate: step 3/3. Delta crystallin, the principal crystallin in embryonic lens, is found only in birds and reptiles. This protein also functions as an enzymatically active argininosuccinate lyase, but it has a low activity. This is Argininosuccinate lyase (ASL) from Columba livia (Rock dove).